Here is a 201-residue protein sequence, read N- to C-terminus: 3-isopropylmalate dehydratase small subunit (201 aa).

The protein belongs to the LeuD family. LeuD type 1 subfamily. Heterodimer of LeuC and LeuD.

The catalysed reaction is (2R,3S)-3-isopropylmalate = (2S)-2-isopropylmalate. It functions in the pathway amino-acid biosynthesis; L-leucine biosynthesis; L-leucine from 3-methyl-2-oxobutanoate: step 2/4. In terms of biological role, catalyzes the isomerization between 2-isopropylmalate and 3-isopropylmalate, via the formation of 2-isopropylmaleate. The polypeptide is 3-isopropylmalate dehydratase small subunit (Shewanella baltica (strain OS155 / ATCC BAA-1091)).